Here is a 306-residue protein sequence, read N- to C-terminus: N-acetylmuramic acid 6-phosphate etherase (306 aa).

Residues isoleucine 62–lysine 225 form the SIS domain. Catalysis depends on glutamate 90, which acts as the Proton donor. Glutamate 121 is an active-site residue.

The protein belongs to the GCKR-like family. MurNAc-6-P etherase subfamily. As to quaternary structure, homodimer.

It catalyses the reaction N-acetyl-D-muramate 6-phosphate + H2O = N-acetyl-D-glucosamine 6-phosphate + (R)-lactate. The protein operates within amino-sugar metabolism; 1,6-anhydro-N-acetylmuramate degradation. Its pathway is amino-sugar metabolism; N-acetylmuramate degradation. It participates in cell wall biogenesis; peptidoglycan recycling. In terms of biological role, specifically catalyzes the cleavage of the D-lactyl ether substituent of MurNAc 6-phosphate, producing GlcNAc 6-phosphate and D-lactate. Together with AnmK, is also required for the utilization of anhydro-N-acetylmuramic acid (anhMurNAc) either imported from the medium or derived from its own cell wall murein, and thus plays a role in cell wall recycling. This chain is N-acetylmuramic acid 6-phosphate etherase, found in Vibrio atlanticus (strain LGP32) (Vibrio splendidus (strain Mel32)).